The chain runs to 77 residues: Chassatide C2 (77 aa).

The N-terminal stretch at M1–S24 is a signal peptide. The propeptide at S25–N44 is removed in mature form. The segment at residues G45–N75 is a cross-link (cyclopeptide (Gly-Asn)). 3 cysteine pairs are disulfide-bonded: C48/C65, C52/C67, and C57/C72. M63 is modified (methionine sulfoxide; in form chassatide chaC2A). The propeptide at E76–L77 is removed in mature form.

It belongs to the cyclotide family. Bracelet subfamily. In terms of processing, this is a cyclic peptide. As to expression, expressed in fruit, pedicel and stem but not in leaf and root (at protein level).

Its function is as follows. Chassatide C2: Probably participates in a plant defense mechanism. Has no activity against bacteria up to a concentration of 80 uM. Has cytotoxic but no hemolytic activity. Chassatide C2A: Probably participates in a plant defense mechanism. Has no activity against bacteria up to a concentration of 80 uM. Has no cytotoxic and no hemolytic activity. The polypeptide is Chassatide C2 (Chassalia chartacea (Chassalia curviflora)).